The chain runs to 130 residues: Small ribosomal subunit protein uS9 (130 aa).

Residues 109–130 (RMKERKKYGLKGARRAPQFSKR) are disordered. Residues 111-130 (KERKKYGLKGARRAPQFSKR) are compositionally biased toward basic residues.

This sequence belongs to the universal ribosomal protein uS9 family.

In Alkaliphilus metalliredigens (strain QYMF), this protein is Small ribosomal subunit protein uS9.